The chain runs to 88 residues: Small ribosomal subunit protein bS20 (88 aa).

It belongs to the bacterial ribosomal protein bS20 family.

Functionally, binds directly to 16S ribosomal RNA. The sequence is that of Small ribosomal subunit protein bS20 from Desulforamulus reducens (strain ATCC BAA-1160 / DSM 100696 / MI-1) (Desulfotomaculum reducens).